We begin with the raw amino-acid sequence, 430 residues long: UDP-N-acetylglucosamine 1-carboxyvinyltransferase (430 aa).

22–23 (KN) serves as a coordination point for phosphoenolpyruvate. R102 is a UDP-N-acetyl-alpha-D-glucosamine binding site. The active-site Proton donor is C126. A 2-(S-cysteinyl)pyruvic acid O-phosphothioketal modification is found at C126. UDP-N-acetyl-alpha-D-glucosamine is bound by residues 131-135 (RPVDL), 172-175 (KVSV), D317, and I339.

The protein belongs to the EPSP synthase family. MurA subfamily.

It is found in the cytoplasm. The catalysed reaction is phosphoenolpyruvate + UDP-N-acetyl-alpha-D-glucosamine = UDP-N-acetyl-3-O-(1-carboxyvinyl)-alpha-D-glucosamine + phosphate. It participates in cell wall biogenesis; peptidoglycan biosynthesis. In terms of biological role, cell wall formation. Adds enolpyruvyl to UDP-N-acetylglucosamine. The sequence is that of UDP-N-acetylglucosamine 1-carboxyvinyltransferase from Sinorhizobium medicae (strain WSM419) (Ensifer medicae).